The following is a 361-amino-acid chain: Phospho-N-acetylmuramoyl-pentapeptide-transferase (361 aa).

A run of 10 helical transmembrane segments spans residues 28–48 (LAII…IEFL), 74–94 (TMGG…LADL), 99–119 (IWIT…DDYA), 133–153 (SKLL…EYLD), 168–188 (LSLD…VGSS), 203–223 (VPIA…GNLI), 236–256 (TGEL…FLWF), 263–283 (VFMG…ISVI), 288–308 (IVLA…ILQV), and 338–358 (KVVI…LSSL).

Belongs to the glycosyltransferase 4 family. MraY subfamily. Requires Mg(2+) as cofactor.

It localises to the cell inner membrane. It catalyses the reaction UDP-N-acetyl-alpha-D-muramoyl-L-alanyl-gamma-D-glutamyl-meso-2,6-diaminopimeloyl-D-alanyl-D-alanine + di-trans,octa-cis-undecaprenyl phosphate = di-trans,octa-cis-undecaprenyl diphospho-N-acetyl-alpha-D-muramoyl-L-alanyl-D-glutamyl-meso-2,6-diaminopimeloyl-D-alanyl-D-alanine + UMP. It participates in cell wall biogenesis; peptidoglycan biosynthesis. In terms of biological role, catalyzes the initial step of the lipid cycle reactions in the biosynthesis of the cell wall peptidoglycan: transfers peptidoglycan precursor phospho-MurNAc-pentapeptide from UDP-MurNAc-pentapeptide onto the lipid carrier undecaprenyl phosphate, yielding undecaprenyl-pyrophosphoryl-MurNAc-pentapeptide, known as lipid I. In Rickettsia africae (strain ESF-5), this protein is Phospho-N-acetylmuramoyl-pentapeptide-transferase.